The sequence spans 368 residues: Protein mab-21-like 3 (368 aa).

Belongs to the mab-21 family.

The chain is Protein mab-21-like 3 (mab21L3) from Xenopus laevis (African clawed frog).